A 103-amino-acid polypeptide reads, in one-letter code: Vesicle-associated membrane protein 3 (103 aa).

The segment at 1–25 is disordered; the sequence is MSTGVPSGSSAATGSNRRLQQTQNQ. Topologically, residues 1-81 are cytoplasmic; the sequence is MSTGVPSGSS…KRKYWWKNCK (81 aa). Positions 18–78 constitute a v-SNARE coiled-coil homology domain; the sequence is RLQQTQNQVD…AKLKRKYWWK (61 aa). Residues Lys70, Lys72, and Lys81 each participate in a glycyl lysine isopeptide (Lys-Gly) (interchain with G-Cter in ubiquitin) cross-link. The helical; Anchor for type IV membrane protein transmembrane segment at 82–102 threads the bilayer; sequence MWAIGISVLVIIVIIIIVWCV. A topological domain (vesicular) is located at residue Ser103.

The protein belongs to the synaptobrevin family. As to quaternary structure, interacts with POPDC1 (via the C-terminus cytoplasmic tail). Interacts with BCAP31; involved in VAMP3 export from the endoplasmic reticulum. Interacts with BAIAP3; this interaction is increased in the presence of calcium. Interacts with PICALM. Post-translationally, ubiquitinated by RNF167 at Lys-70, Lys-72 and Lys-81, regulating the recycling endosome pathway. In terms of processing, (Microbial infection) Targeted and hydrolyzed by C.botulinum neurotoxin type D (BoNT/D, botD) which hydrolyzes the 46-Lys-|-Leu-47 bond and probably inhibits neurotransmitter release. (Microbial infection) Targeted and hydrolyzed by C.botulinum neurotoxin type F (BoNT/F, botF) which hydrolyzes the 45-Gln-|-Lys-46 bond and probably inhibits neurotransmitter release. Post-translationally, (Microbial infection) Targeted and hydrolyzed by C.tetani toxin (tetX) which hydrolyzes the 63-Gln-|-Phe-64 bond and probably inhibits neurotransmitter release. As to expression, ubiquitous.

The protein resides in the early endosome membrane. The protein localises to the recycling endosome membrane. It is found in the synapse. Its subcellular location is the synaptosome. SNARE involved in vesicular transport from the late endosomes to the trans-Golgi network. This chain is Vesicle-associated membrane protein 3 (Vamp3), found in Rattus norvegicus (Rat).